A 615-amino-acid chain; its full sequence is TORTIFOLIA1-like protein 3 (615 aa).

HEAT repeat units follow at residues 44 to 81 (GNLQSFISVILSVDTGDKPAVRKHCIHLLAVLSVSLPL), 86 to 123 (PFLSKILTRITRRLRDPDSSIRSTCVAAVSAISSRTTK), 125 to 163 (PFYSAFMKPLADTLFTEQEVNAQIGAALCLAAAIDSASD), 168 to 205 (RLGQTLLPRLEKLVKCNAFKAKSAGVVVIGSVIGAGGL), and 213 to 250 (GGLKGLVDCLLSFLVSEDWAARKAAAEALGRLATMERN). Positions 288-446 (VPDLSEEVSP…HHVLSENPNS (159 aa)) are disordered. Residues 318–347 (RVGSTPAKSRTHLVNRSTPPGSSLATTARK) are compositionally biased toward polar residues. The span at 391 to 406 (DEQHCDHDENAKETSH) shows a compositional bias: basic and acidic residues. Positions 407-426 (SSHNTVQKLGGVSSSLNGNI) are enriched in polar residues. Ser-456 carries the post-translational modification Phosphoserine.

In Arabidopsis thaliana (Mouse-ear cress), this protein is TORTIFOLIA1-like protein 3.